The chain runs to 467 residues: ATP synthase subunit beta (467 aa).

154–161 (GGAGVGKT) is an ATP binding site.

It belongs to the ATPase alpha/beta chains family. In terms of assembly, F-type ATPases have 2 components, CF(1) - the catalytic core - and CF(0) - the membrane proton channel. CF(1) has five subunits: alpha(3), beta(3), gamma(1), delta(1), epsilon(1). CF(0) has three main subunits: a(1), b(2) and c(9-12). The alpha and beta chains form an alternating ring which encloses part of the gamma chain. CF(1) is attached to CF(0) by a central stalk formed by the gamma and epsilon chains, while a peripheral stalk is formed by the delta and b chains.

Its subcellular location is the cell inner membrane. The enzyme catalyses ATP + H2O + 4 H(+)(in) = ADP + phosphate + 5 H(+)(out). Produces ATP from ADP in the presence of a proton gradient across the membrane. The catalytic sites are hosted primarily by the beta subunits. The polypeptide is ATP synthase subunit beta (Leptospira borgpetersenii serovar Hardjo-bovis (strain JB197)).